Here is a 114-residue protein sequence, read N- to C-terminus: Hydrogenase maturation factor HypA (114 aa).

His-2 serves as a coordination point for Ni(2+). Zn(2+)-binding residues include Cys-73, Cys-76, Cys-89, and Cys-92.

This sequence belongs to the HypA/HybF family.

Involved in the maturation of [NiFe] hydrogenases. Required for nickel insertion into the metal center of the hydrogenase. In Azoarcus sp. (strain BH72), this protein is Hydrogenase maturation factor HypA.